Consider the following 130-residue polypeptide: Protein ApaG (130 aa).

Residues 3 to 127 form the ApaG domain; it reads SAVTRGIEVT…FSLDVPEQRR (125 aa).

This chain is Protein ApaG, found in Brucella canis (strain ATCC 23365 / NCTC 10854 / RM-666).